Reading from the N-terminus, the 61-residue chain is Progonadoliberin-1 (61 aa).

The residue at position 1 (Q1) is a Pyrrolidone carboxylic acid. At G10 the chain carries Glycine amide.

It belongs to the GnRH family.

It localises to the secreted. In terms of biological role, stimulates the secretion of gonadotropins; it stimulates the secretion of both luteinizing and follicle-stimulating hormones. The polypeptide is Progonadoliberin-1 (GNRH1) (Ovis aries (Sheep)).